A 192-amino-acid chain; its full sequence is Cysteine and glycine-rich protein 1 (192 aa).

One can recognise an LIM zinc-binding 1 domain in the interval 10–61; that stretch reads CGVCQKAVYFAEEVQCEGSSFHKSCFLCMVCKKNLDSTTVAVHGDEIYCKSC. Residues 64–69 carry the Nuclear localization signal motif; the sequence is KKYGPK. The LIM zinc-binding 2 domain maps to 118–169; it reads CPRCGQAVYAAEKVIGAGKSWHKSCFRCAKCGKSLESTTLADKDGEIYCKGC.

As to quaternary structure, probable monomer. Interacts with ZYX. In terms of tissue distribution, most prominent in tissues that are enriched in smooth muscle cells, such as gizzard, stomach, and intestine. Lower level in the heart, no expression in liver, skeletal muscle, or brain.

Its subcellular location is the nucleus. The protein resides in the cytoplasm. It is found in the cytoskeleton. Functionally, heat stable protein, that interacts with zyxin/ZYX. May be a component of a signal transduction pathway that mediates adhesion-stimulated changes in gene expression. This Gallus gallus (Chicken) protein is Cysteine and glycine-rich protein 1 (CSRP1).